We begin with the raw amino-acid sequence, 593 residues long: Proline--tRNA ligase (593 aa).

Belongs to the class-II aminoacyl-tRNA synthetase family. ProS type 1 subfamily. Homodimer.

The protein resides in the cytoplasm. The catalysed reaction is tRNA(Pro) + L-proline + ATP = L-prolyl-tRNA(Pro) + AMP + diphosphate. Its function is as follows. Catalyzes the attachment of proline to tRNA(Pro) in a two-step reaction: proline is first activated by ATP to form Pro-AMP and then transferred to the acceptor end of tRNA(Pro). As ProRS can inadvertently accommodate and process non-cognate amino acids such as alanine and cysteine, to avoid such errors it has two additional distinct editing activities against alanine. One activity is designated as 'pretransfer' editing and involves the tRNA(Pro)-independent hydrolysis of activated Ala-AMP. The other activity is designated 'posttransfer' editing and involves deacylation of mischarged Ala-tRNA(Pro). The misacylated Cys-tRNA(Pro) is not edited by ProRS. This is Proline--tRNA ligase from Synechococcus sp. (strain CC9605).